The following is a 126-amino-acid chain: Probable DNA-directed RNA polymerase II subunit RPB11 (126 aa).

It belongs to the archaeal Rpo11/eukaryotic RPB11/RPC19 RNA polymerase subunit family. In terms of assembly, component of the RNA polymerase II (Pol II) complex consisting of 12 subunits.

Its subcellular location is the nucleus. Functionally, DNA-dependent RNA polymerase catalyzes the transcription of DNA into RNA using the four ribonucleoside triphosphates as substrates. Component of RNA polymerase II which synthesizes mRNA precursors and many functional non-coding RNAs. Pol II is the central component of the basal RNA polymerase II transcription machinery. It is composed of mobile elements that move relative to each other. RPB11 is part of the core element with the central large cleft. In Plasmodium chabaudi chabaudi, this protein is Probable DNA-directed RNA polymerase II subunit RPB11.